A 334-amino-acid polypeptide reads, in one-letter code: Ketol-acid reductoisomerase (NADP(+)) (334 aa).

The 181-residue stretch at 1-181 (MTTVYYDQDV…GATRAGVIET (181 aa)) folds into the KARI N-terminal Rossmann domain. Residues 25 to 28 (YGSQ), Arg48, Ser52, and 82 to 85 (DEIQ) contribute to the NADP(+) site. The active site involves His107. Gly133 lines the NADP(+) pocket. Positions 182 to 327 (TFKEETETDL…RELREMMPFI (146 aa)) constitute a KARI C-terminal knotted domain. Residues Asp190, Glu194, Glu226, and Glu230 each contribute to the Mg(2+) site. A substrate-binding site is contributed by Ser251.

Belongs to the ketol-acid reductoisomerase family. The cofactor is Mg(2+).

It catalyses the reaction (2R)-2,3-dihydroxy-3-methylbutanoate + NADP(+) = (2S)-2-acetolactate + NADPH + H(+). The catalysed reaction is (2R,3R)-2,3-dihydroxy-3-methylpentanoate + NADP(+) = (S)-2-ethyl-2-hydroxy-3-oxobutanoate + NADPH + H(+). It participates in amino-acid biosynthesis; L-isoleucine biosynthesis; L-isoleucine from 2-oxobutanoate: step 2/4. It functions in the pathway amino-acid biosynthesis; L-valine biosynthesis; L-valine from pyruvate: step 2/4. Functionally, involved in the biosynthesis of branched-chain amino acids (BCAA). Catalyzes an alkyl-migration followed by a ketol-acid reduction of (S)-2-acetolactate (S2AL) to yield (R)-2,3-dihydroxy-isovalerate. In the isomerase reaction, S2AL is rearranged via a Mg-dependent methyl migration to produce 3-hydroxy-3-methyl-2-ketobutyrate (HMKB). In the reductase reaction, this 2-ketoacid undergoes a metal-dependent reduction by NADPH to yield (R)-2,3-dihydroxy-isovalerate. The sequence is that of Ketol-acid reductoisomerase (NADP(+)) from Staphylococcus aureus (strain MSSA476).